The following is a 137-amino-acid chain: Protein MesC (137 aa).

In Leuconostoc mesenteroides, this protein is Protein MesC (mesC).